We begin with the raw amino-acid sequence, 321 residues long: Phospho-N-acetylmuramoyl-pentapeptide-transferase (321 aa).

The next 10 helical transmembrane spans lie at 1–21 (MIFV…PVLI), 50–70 (MGGL…IIFV), 76–96 (IILL…DDYI), 112–132 (FLAQ…FHLV), 140–160 (IPFT…IVFL), 176–196 (GLAT…SFVL), 200–220 (AIGI…PYNI), 225–245 (VFMG…ISIM), 250–270 (LSLI…MLQV), and 300–320 (VVTV…WIGV).

It belongs to the glycosyltransferase 4 family. MraY subfamily. The cofactor is Mg(2+).

Its subcellular location is the cell membrane. The catalysed reaction is UDP-N-acetyl-alpha-D-muramoyl-L-alanyl-gamma-D-glutamyl-L-lysyl-D-alanyl-D-alanine + di-trans,octa-cis-undecaprenyl phosphate = Mur2Ac(oyl-L-Ala-gamma-D-Glu-L-Lys-D-Ala-D-Ala)-di-trans,octa-cis-undecaprenyl diphosphate + UMP. Its pathway is cell wall biogenesis; peptidoglycan biosynthesis. In terms of biological role, catalyzes the initial step of the lipid cycle reactions in the biosynthesis of the cell wall peptidoglycan: transfers peptidoglycan precursor phospho-MurNAc-pentapeptide from UDP-MurNAc-pentapeptide onto the lipid carrier undecaprenyl phosphate, yielding undecaprenyl-pyrophosphoryl-MurNAc-pentapeptide, known as lipid I. The protein is Phospho-N-acetylmuramoyl-pentapeptide-transferase of Staphylococcus aureus (strain bovine RF122 / ET3-1).